The following is a 496-amino-acid chain: ATP synthase subunit beta (496 aa).

155–162 contributes to the ATP binding site; the sequence is GGAGVGKT.

Belongs to the ATPase alpha/beta chains family. F-type ATPases have 2 components, CF(1) - the catalytic core - and CF(0) - the membrane proton channel. CF(1) has five subunits: alpha(3), beta(3), gamma(1), delta(1), epsilon(1). CF(0) has three main subunits: a(1), b(2) and c(9-12). The alpha and beta chains form an alternating ring which encloses part of the gamma chain. CF(1) is attached to CF(0) by a central stalk formed by the gamma and epsilon chains, while a peripheral stalk is formed by the delta and b chains.

Its subcellular location is the cell membrane. It catalyses the reaction ATP + H2O + 4 H(+)(in) = ADP + phosphate + 5 H(+)(out). Functionally, produces ATP from ADP in the presence of a proton gradient across the membrane. The catalytic sites are hosted primarily by the beta subunits. This Karelsulcia muelleri (strain GWSS) (Sulcia muelleri) protein is ATP synthase subunit beta.